Reading from the N-terminus, the 412-residue chain is Serine hydroxymethyltransferase (412 aa).

Residues Leu-117 and 121–123 (GHL) contribute to the (6S)-5,6,7,8-tetrahydrofolate site. Position 226 is an N6-(pyridoxal phosphate)lysine (Lys-226). 349 to 351 (SPF) is a (6S)-5,6,7,8-tetrahydrofolate binding site.

Belongs to the SHMT family. As to quaternary structure, homodimer. Pyridoxal 5'-phosphate is required as a cofactor.

Its subcellular location is the cytoplasm. It carries out the reaction (6R)-5,10-methylene-5,6,7,8-tetrahydrofolate + glycine + H2O = (6S)-5,6,7,8-tetrahydrofolate + L-serine. The protein operates within one-carbon metabolism; tetrahydrofolate interconversion. It participates in amino-acid biosynthesis; glycine biosynthesis; glycine from L-serine: step 1/1. Its function is as follows. Catalyzes the reversible interconversion of serine and glycine with tetrahydrofolate (THF) serving as the one-carbon carrier. This reaction serves as the major source of one-carbon groups required for the biosynthesis of purines, thymidylate, methionine, and other important biomolecules. Also exhibits THF-independent aldolase activity toward beta-hydroxyamino acids, producing glycine and aldehydes, via a retro-aldol mechanism. In Oleidesulfovibrio alaskensis (strain ATCC BAA-1058 / DSM 17464 / G20) (Desulfovibrio alaskensis), this protein is Serine hydroxymethyltransferase.